A 533-amino-acid polypeptide reads, in one-letter code: uncharacterized protein (533 aa).

An N-terminal signal peptide occupies residues 1-21 (MVKVWKIGFGVFLPTALLFSA). Residue Cys22 is the site of N-palmitoyl cysteine attachment. A lipid anchor (S-diacylglycerol cysteine) is attached at Cys22. A disordered region spans residues 91–111 (LSKNKEGQTASQTRSSSEQTT). The span at 97-111 (GQTASQTRSSSEQTT) shows a compositional bias: polar residues.

This sequence belongs to the MG067/MG068/MG395 family.

The protein localises to the cell membrane. This is an uncharacterized protein from Mycoplasma pneumoniae (strain ATCC 29342 / M129 / Subtype 1) (Mycoplasmoides pneumoniae).